The sequence spans 184 residues: Leucine-rich repeat-containing protein 20 (184 aa).

LRR repeat units lie at residues 23 to 44 (GSDT…IYKV), 51 to 72 (QIHL…FMTT), 75 to 96 (QLRE…VSSL), 98 to 120 (HLRA…TTLP), 121 to 141 (ALET…EKLA), and 145 to 167 (ALRV…APPL). A Phosphoserine modification is found at S175.

This Mus musculus (Mouse) protein is Leucine-rich repeat-containing protein 20 (Lrrc20).